The primary structure comprises 891 residues: Alanine--tRNA ligase (891 aa).

Positions 564, 568, 681, and 685 each coordinate Zn(2+).

Belongs to the class-II aminoacyl-tRNA synthetase family. The cofactor is Zn(2+).

It is found in the cytoplasm. The enzyme catalyses tRNA(Ala) + L-alanine + ATP = L-alanyl-tRNA(Ala) + AMP + diphosphate. Functionally, catalyzes the attachment of alanine to tRNA(Ala) in a two-step reaction: alanine is first activated by ATP to form Ala-AMP and then transferred to the acceptor end of tRNA(Ala). Also edits incorrectly charged Ser-tRNA(Ala) and Gly-tRNA(Ala) via its editing domain. The polypeptide is Alanine--tRNA ligase (Methylorubrum populi (strain ATCC BAA-705 / NCIMB 13946 / BJ001) (Methylobacterium populi)).